The primary structure comprises 150 residues: Large-conductance mechanosensitive channel (150 aa).

2 helical membrane-spanning segments follow: residues 14–34 and 81–101; these read VIDL…VTSL and GLFI…FIVI.

This sequence belongs to the MscL family. Homopentamer.

It is found in the cell membrane. Functionally, channel that opens in response to stretch forces in the membrane lipid bilayer. May participate in the regulation of osmotic pressure changes within the cell. The chain is Large-conductance mechanosensitive channel from Desulfitobacterium hafniense (strain DSM 10664 / DCB-2).